We begin with the raw amino-acid sequence, 470 residues long: Methylenetetrahydrofolate--tRNA-(uracil-5-)-methyltransferase TrmFO (470 aa).

Position 10 to 15 (10 to 15 (GAGLAG)) interacts with FAD.

This sequence belongs to the MnmG family. TrmFO subfamily. FAD serves as cofactor.

It is found in the cytoplasm. The enzyme catalyses uridine(54) in tRNA + (6R)-5,10-methylene-5,6,7,8-tetrahydrofolate + NADH + H(+) = 5-methyluridine(54) in tRNA + (6S)-5,6,7,8-tetrahydrofolate + NAD(+). The catalysed reaction is uridine(54) in tRNA + (6R)-5,10-methylene-5,6,7,8-tetrahydrofolate + NADPH + H(+) = 5-methyluridine(54) in tRNA + (6S)-5,6,7,8-tetrahydrofolate + NADP(+). Functionally, catalyzes the folate-dependent formation of 5-methyl-uridine at position 54 (M-5-U54) in all tRNAs. This is Methylenetetrahydrofolate--tRNA-(uracil-5-)-methyltransferase TrmFO from Prochlorococcus marinus (strain MIT 9301).